Here is a 338-residue protein sequence, read N- to C-terminus: mRNA decay activator protein ZFP36L1 (338 aa).

Residues 1-111 (MTTTLVSATI…QKQPGSGQVN (111 aa)) form a necessary and sufficient for the association with mRNA decay enzymes and mRNA decay activation region. Position 54 is a phosphoserine; by MAPKAPK2 (serine 54). The interval 71-113 (LKGEPAPSLSSRDSRFRDRSFSEGGERLLPTQKQPGSGQVNSS) is disordered. Residues 82-96 (RDSRFRDRSFSEGGE) are compositionally biased toward basic and acidic residues. Serine 90 is modified (phosphoserine; by PKB/AKT1). Phosphoserine; by PKB/AKT1 and MAPKAPK2 is present on serine 92. Over residues 101–113 (TQKQPGSGQVNSS) the composition is skewed to polar residues. C3H1-type zinc fingers lie at residues 114–142 (RYKTELCRPFEENGACKYGDKCQFAHGIH) and 152–180 (KYKTELCRTFHTIGFCPYGPRCHFIHNAE). The necessary for mRNA decay activation stretch occupies residues 185–338 (LAGGRDLSAD…IFSRLSISDD (154 aa)). Residue serine 203 is modified to Phosphoserine; by PKB/AKT1 and MAPKAPK2. The interval 273 to 338 (SPTTFLFRPM…IFSRLSISDD (66 aa)) is disordered. Residues 305–318 (YLSSSSSSHSGSDS) show a composition bias toward low complexity. At serine 318 the chain carries Phosphoserine. Residue serine 334 is modified to Phosphoserine; by RPS6KA1.

As to quaternary structure, associates with the cytoplasmic CCR4-NOT deadenylase and RNA exosome complexes to trigger ARE-containing mRNA deadenylation and decay processes. Interacts with CNOT1. Interacts (via N-terminus) with CNOT6. Interacts with CNOT7; this interaction is inhibited in response to phorbol 12-myristate 13-acetate (PMA) treatment in a p38 MAPK-dependent manner. Interacts with DCP1A. Interacts (via N-terminus) with DCP2. Interacts (via N-terminus) with EXOSC2. Interacts with XRN1. Interacts (via phosphorylated form) with YWHAB; this interaction occurs in a protein kinase AKT1-dependent manner. Interacts (via phosphorylated form) with YWHAZ; this interaction occurs in a p38 MAPK- and AKT-signaling pathways. Post-translationally, phosphorylated. Phosphorylated by RPS6KA1 at Ser-334 upon phorbol 12-myristate 13-acetate (PMA) treatment; this phosphorylation results in dissociation of the CCR4-NOT deadenylase complex and induces p38 MAPK-mediated stabilization of the low-density lipoprotein receptor LDLR mRNA. Phosphorylated by protein kinase AKT1 at Ser-92 and Ser-203 in response to insulin; these phosphorylations stabilize ZFP36L1, increase the association with 14-3-3 proteins and mediate ARE-containing mRNA stabilization. AKT1-mediated phosphorylation at Ser-92 does not impair ARE-containing RNA-binding. Phosphorylated at Ser-54, Ser-92 and Ser-203 by MAPKAPK2; these phosphorylations increase the association with 14-3-3 proteins and mediate ARE-containing mRNA stabilization in a protein kinase AKT1-independent manner. MAPKAPK2-mediated phosphorylations at Ser-54, Ser-92 and Ser-203 do not impair ARE-containing RNA-binding. Phosphorylations increase the association with 14-3-3 proteins and mediate ARE-containing mRNA stabilization during early adipogenesis in a p38 MAPK- and AKT-dependent manner. In terms of processing, ubiquitinated. Ubiquitination leads to proteasomal degradation, a process inhibited by phosphorylations at Ser-90, Ser-92 and Ser-203. As to expression, expressed in preadipocytes and adipocytes. Expressed in the proximal and distal tubules in the renal cortex (at protein level). Expressed in ovary, heart, kidney, lung, spleen and thymus. Weakly expressed in brain, liver and testis. Expressed in osteoblasts. Expressed in embryonic stem cells (ESCs). Expressed through B lymphocyte development.

It localises to the nucleus. It is found in the cytoplasm. The protein localises to the cytoplasmic granule. The protein resides in the P-body. In terms of biological role, zinc-finger RNA-binding protein that destabilizes several cytoplasmic AU-rich element (ARE)-containing mRNA transcripts by promoting their poly(A) tail removal or deadenylation, and hence provide a mechanism for attenuating protein synthesis. Acts as a 3'-untranslated region (UTR) ARE mRNA-binding adapter protein to communicate signaling events to the mRNA decay machinery. Functions by recruiting the CCR4-NOT deadenylating complex and components of the cytoplasmic RNA decay machinery to the bound ARE-containing mRNAs, and hence promotes ARE-mediated mRNA deadenylation and decay processes. Also induces the degradation of ARE-containing mRNAs even in absence of poly(A) tail. Binds to 3'-UTR ARE of numerous mRNAs. Positively regulates early adipogenesis by promoting ARE-mediated mRNA decay of immediate early genes (IEGs). Promotes ARE-mediated mRNA decay of mineralocorticoid receptor NR3C2 mRNA in response to hypertonic stress. Negatively regulates hematopoietic/erythroid cell differentiation by promoting ARE-mediated mRNA decay of the transcription factor STAT5B mRNA. Positively regulates monocyte/macrophage cell differentiation by promoting ARE-mediated mRNA decay of the cyclin-dependent kinase CDK6 mRNA. Promotes degradation of ARE-containing pluripotency-associated mRNAs in embryonic stem cells (ESCs), such as NANOG, through a fibroblast growth factor (FGF)-induced MAPK-dependent signaling pathway, and hence attenuates ESC self-renewal and positively regulates mesendoderm differentiation. May play a role in mediating pro-apoptotic effects in malignant B-cells by promoting ARE-mediated mRNA decay of BCL2 mRNA. In association with ZFP36L2 maintains quiescence on developing B lymphocytes by promoting ARE-mediated decay of several mRNAs encoding cell cycle regulators that help B cells progress through the cell cycle, and hence ensuring accurate variable-diversity-joining (VDJ) recombination and functional immune cell formation. Together with ZFP36L2 is also necessary for thymocyte development and prevention of T-cell acute lymphoblastic leukemia (T-ALL) transformation by promoting ARE-mediated mRNA decay of the oncogenic transcription factor NOTCH1 mRNA. Involved in the delivery of target ARE-mRNAs to processing bodies (PBs). In addition to its cytosolic mRNA-decay function, plays a role in the regulation of nuclear mRNA 3'-end processing; modulates mRNA 3'-end maturation efficiency of the DLL4 mRNA through binding with an ARE embedded in a weak noncanonical polyadenylation (poly(A)) signal in endothelial cells. Also involved in the regulation of stress granule (SG) and P-body (PB) formation and fusion. Plays a role in vasculogenesis and endocardial development. Involved in the regulation of keratinocyte proliferation, differentiation and apoptosis. Plays a role in myoblast cell differentiation. The protein is mRNA decay activator protein ZFP36L1 of Mus musculus (Mouse).